The primary structure comprises 362 residues: 3-isopropylmalate dehydrogenase (362 aa).

78 to 91 lines the NAD(+) pocket; the sequence is GPKWESLPPDEQPE. Arg-99, Arg-109, Arg-138, and Asp-227 together coordinate substrate. Residues Asp-227, Asp-251, and Asp-255 each coordinate Mg(2+). 285 to 297 serves as a coordination point for NAD(+); it reads GSAPDIAGQGIAN.

It belongs to the isocitrate and isopropylmalate dehydrogenases family. LeuB type 1 subfamily. Homodimer. Mg(2+) is required as a cofactor. Requires Mn(2+) as cofactor.

Its subcellular location is the cytoplasm. The catalysed reaction is (2R,3S)-3-isopropylmalate + NAD(+) = 4-methyl-2-oxopentanoate + CO2 + NADH. The protein operates within amino-acid biosynthesis; L-leucine biosynthesis; L-leucine from 3-methyl-2-oxobutanoate: step 3/4. In terms of biological role, catalyzes the oxidation of 3-carboxy-2-hydroxy-4-methylpentanoate (3-isopropylmalate) to 3-carboxy-4-methyl-2-oxopentanoate. The product decarboxylates to 4-methyl-2 oxopentanoate. The polypeptide is 3-isopropylmalate dehydrogenase (Geobacter sulfurreducens (strain ATCC 51573 / DSM 12127 / PCA)).